The following is a 96-amino-acid chain: Aspartyl/glutamyl-tRNA(Asn/Gln) amidotransferase subunit C (96 aa).

This sequence belongs to the GatC family. In terms of assembly, heterotrimer of A, B and C subunits.

The enzyme catalyses L-glutamyl-tRNA(Gln) + L-glutamine + ATP + H2O = L-glutaminyl-tRNA(Gln) + L-glutamate + ADP + phosphate + H(+). The catalysed reaction is L-aspartyl-tRNA(Asn) + L-glutamine + ATP + H2O = L-asparaginyl-tRNA(Asn) + L-glutamate + ADP + phosphate + 2 H(+). Its function is as follows. Allows the formation of correctly charged Asn-tRNA(Asn) or Gln-tRNA(Gln) through the transamidation of misacylated Asp-tRNA(Asn) or Glu-tRNA(Gln) in organisms which lack either or both of asparaginyl-tRNA or glutaminyl-tRNA synthetases. The reaction takes place in the presence of glutamine and ATP through an activated phospho-Asp-tRNA(Asn) or phospho-Glu-tRNA(Gln). In Aliarcobacter butzleri (strain RM4018) (Arcobacter butzleri), this protein is Aspartyl/glutamyl-tRNA(Asn/Gln) amidotransferase subunit C.